Consider the following 381-residue polypeptide: Mannitol-1-phosphate 5-dehydrogenase (381 aa).

3 to 14 (AVHFGAGNIGRG) lines the NAD(+) pocket.

Belongs to the mannitol dehydrogenase family.

It carries out the reaction D-mannitol 1-phosphate + NAD(+) = beta-D-fructose 6-phosphate + NADH + H(+). The protein is Mannitol-1-phosphate 5-dehydrogenase of Photobacterium profundum (strain SS9).